Consider the following 387-residue polypeptide: UDP-N-acetylglucosamine--N-acetylmuramyl-(pentapeptide) pyrophosphoryl-undecaprenol N-acetylglucosamine transferase (387 aa).

Residues 26–28 (TGG), Asn-137, Arg-177, Ser-205, and Gln-306 each bind UDP-N-acetyl-alpha-D-glucosamine.

It belongs to the glycosyltransferase 28 family. MurG subfamily.

The protein resides in the cell inner membrane. The enzyme catalyses di-trans,octa-cis-undecaprenyl diphospho-N-acetyl-alpha-D-muramoyl-L-alanyl-D-glutamyl-meso-2,6-diaminopimeloyl-D-alanyl-D-alanine + UDP-N-acetyl-alpha-D-glucosamine = di-trans,octa-cis-undecaprenyl diphospho-[N-acetyl-alpha-D-glucosaminyl-(1-&gt;4)]-N-acetyl-alpha-D-muramoyl-L-alanyl-D-glutamyl-meso-2,6-diaminopimeloyl-D-alanyl-D-alanine + UDP + H(+). It participates in cell wall biogenesis; peptidoglycan biosynthesis. Cell wall formation. Catalyzes the transfer of a GlcNAc subunit on undecaprenyl-pyrophosphoryl-MurNAc-pentapeptide (lipid intermediate I) to form undecaprenyl-pyrophosphoryl-MurNAc-(pentapeptide)GlcNAc (lipid intermediate II). The protein is UDP-N-acetylglucosamine--N-acetylmuramyl-(pentapeptide) pyrophosphoryl-undecaprenol N-acetylglucosamine transferase of Rhodospirillum rubrum (strain ATCC 11170 / ATH 1.1.1 / DSM 467 / LMG 4362 / NCIMB 8255 / S1).